Reading from the N-terminus, the 280-residue chain is Pantothenate synthetase (280 aa).

Met30–His37 is an ATP binding site. The Proton donor role is filled by His37. Gln61 is a binding site for (R)-pantoate. Residue Gln61 coordinates beta-alanine. Gly148–Asp151 contacts ATP. Position 154 (Gln154) interacts with (R)-pantoate. ATP contacts are provided by residues Val177 and Leu185 to Arg188.

The protein belongs to the pantothenate synthetase family. As to quaternary structure, homodimer.

It is found in the cytoplasm. It carries out the reaction (R)-pantoate + beta-alanine + ATP = (R)-pantothenate + AMP + diphosphate + H(+). Its pathway is cofactor biosynthesis; (R)-pantothenate biosynthesis; (R)-pantothenate from (R)-pantoate and beta-alanine: step 1/1. Its function is as follows. Catalyzes the condensation of pantoate with beta-alanine in an ATP-dependent reaction via a pantoyl-adenylate intermediate. The polypeptide is Pantothenate synthetase (Azobacteroides pseudotrichonymphae genomovar. CFP2).